Consider the following 248-residue polypeptide: MFHVKHVGPVEPAAGDPEVPPVAELGAAPESAAALFGPRLATAQRYAEVLGTAGVERGLLGPREVDRIWDRHILNSAAVAELLGRGDRIIDIGSGAGLPGIPLAIARPDLEVVLLEPLLRRSEFLTEVVDELGLAVEVVRGRAEERPVRDRFGERDAAVSRAVAALDKLTKWSMPLLRHDGRMLAIKGERAAEEVDRYRRVMTASGAADVRVVTCGANYLRPPATVVSARRAKPPHPKSARTGKAGTR.

A disordered region spans residues 1-23; that stretch reads MFHVKHVGPVEPAAGDPEVPPVA. S-adenosyl-L-methionine contacts are provided by residues G93, L98, 143-144, and R161; that span reads AE. The interval 226-248 is disordered; sequence VVSARRAKPPHPKSARTGKAGTR. Basic residues predominate over residues 230–248; it reads RRAKPPHPKSARTGKAGTR.

The protein belongs to the methyltransferase superfamily. RNA methyltransferase RsmG family.

It is found in the cytoplasm. Its function is as follows. Specifically methylates the N7 position of guanine in position 518 of 16S rRNA. The sequence is that of Ribosomal RNA small subunit methyltransferase G from Mycolicibacterium paratuberculosis (strain ATCC BAA-968 / K-10) (Mycobacterium paratuberculosis).